The sequence spans 299 residues: Protoheme IX farnesyltransferase 1 (299 aa).

A run of 8 helical transmembrane segments spans residues 25–45 (VVVLMLITSLVGMFLATRAGV), 47–67 (WTVLVFGNLGIALCAGGAAAV), 95–115 (TGALTFALVLALLGQALLLTF), 119–139 (LTAWLTLASLLGYAVIYTGFL), 147–167 (IVIGGLAGAAPPLLGWTAATG), 173–193 (PLLLVLIIFAWTPPHFWALAI), 226–246 (ALLAVSLLPYVIHMSGLLYLI), and 279–299 (IWYLFLLFIALLVDHYLLLNL).

Belongs to the UbiA prenyltransferase family. Protoheme IX farnesyltransferase subfamily.

It localises to the cell inner membrane. It carries out the reaction heme b + (2E,6E)-farnesyl diphosphate + H2O = Fe(II)-heme o + diphosphate. It functions in the pathway porphyrin-containing compound metabolism; heme O biosynthesis; heme O from protoheme: step 1/1. Converts heme B (protoheme IX) to heme O by substitution of the vinyl group on carbon 2 of heme B porphyrin ring with a hydroxyethyl farnesyl side group. The chain is Protoheme IX farnesyltransferase 1 from Pseudomonas fluorescens (strain Pf0-1).